A 151-amino-acid polypeptide reads, in one-letter code: MAKPHCSSRSGLLALPRGGSGQPGYGTQSSSNVVGDIDVRASTHKLNRKDNSADKGDTLRPEFSGDPDSEVENNKFAFSPGQLDKLLNPKNFGAFGAFGGLRGLENGLRTNVQSGLSMDETVLDGMVNFNEAVSRTFVPAPKSASPAPLAP.

Residues Met-1 to Glu-72 are disordered. Residues Arg-48–Arg-60 show a composition bias toward basic and acidic residues.

The sequence is that of Conidium-specific protein (SpoC1-C1D) from Emericella nidulans (strain FGSC A4 / ATCC 38163 / CBS 112.46 / NRRL 194 / M139) (Aspergillus nidulans).